The chain runs to 197 residues: Xanthine phosphoribosyltransferase (197 aa).

Residues L20 and N27 each contribute to the xanthine site. 128-132 (ANGQA) contacts 5-phospho-alpha-D-ribose 1-diphosphate. K156 contacts xanthine.

This sequence belongs to the purine/pyrimidine phosphoribosyltransferase family. Xpt subfamily. In terms of assembly, homodimer.

The protein localises to the cytoplasm. It carries out the reaction XMP + diphosphate = xanthine + 5-phospho-alpha-D-ribose 1-diphosphate. It participates in purine metabolism; XMP biosynthesis via salvage pathway; XMP from xanthine: step 1/1. Its function is as follows. Converts the preformed base xanthine, a product of nucleic acid breakdown, to xanthosine 5'-monophosphate (XMP), so it can be reused for RNA or DNA synthesis. This chain is Xanthine phosphoribosyltransferase, found in Bacillus cereus (strain ZK / E33L).